A 363-amino-acid chain; its full sequence is UDP-N-acetylglucosamine--N-acetylmuramyl-(pentapeptide) pyrophosphoryl-undecaprenol N-acetylglucosamine transferase (363 aa).

Residues 16 to 18, N128, R167, S195, I249, 268 to 273, and Q294 each bind UDP-N-acetyl-alpha-D-glucosamine; these read TGG and ALTVSE.

Belongs to the glycosyltransferase 28 family. MurG subfamily.

It localises to the cell inner membrane. It catalyses the reaction di-trans,octa-cis-undecaprenyl diphospho-N-acetyl-alpha-D-muramoyl-L-alanyl-D-glutamyl-meso-2,6-diaminopimeloyl-D-alanyl-D-alanine + UDP-N-acetyl-alpha-D-glucosamine = di-trans,octa-cis-undecaprenyl diphospho-[N-acetyl-alpha-D-glucosaminyl-(1-&gt;4)]-N-acetyl-alpha-D-muramoyl-L-alanyl-D-glutamyl-meso-2,6-diaminopimeloyl-D-alanyl-D-alanine + UDP + H(+). It participates in cell wall biogenesis; peptidoglycan biosynthesis. Its function is as follows. Cell wall formation. Catalyzes the transfer of a GlcNAc subunit on undecaprenyl-pyrophosphoryl-MurNAc-pentapeptide (lipid intermediate I) to form undecaprenyl-pyrophosphoryl-MurNAc-(pentapeptide)GlcNAc (lipid intermediate II). This chain is UDP-N-acetylglucosamine--N-acetylmuramyl-(pentapeptide) pyrophosphoryl-undecaprenol N-acetylglucosamine transferase, found in Marinobacter nauticus (strain ATCC 700491 / DSM 11845 / VT8) (Marinobacter aquaeolei).